The primary structure comprises 264 residues: 14-3-3-like protein GF14-A (264 aa).

A disordered region spans residues 245 to 264 (DMQDDGGDEMRDATKPEDEH). Basic and acidic residues predominate over residues 252–264 (DEMRDATKPEDEH).

Belongs to the 14-3-3 family.

Is associated with a DNA binding complex that binds to the G box, a well-characterized cis-acting DNA regulatory element found in plant genes. This Oryza sativa subsp. japonica (Rice) protein is 14-3-3-like protein GF14-A (GF14A).